The sequence spans 206 residues: Protein-methionine-sulfoxide reductase heme-binding subunit MsrQ (206 aa).

Helical transmembrane passes span 13 to 33, 79 to 99, 116 to 136, 147 to 167, and 169 to 189; these read IAIW…INLG, LLGL…SILE, PYLT…LTST, WQKL…HYLW, and VKTL…LLLL.

It belongs to the MsrQ family. As to quaternary structure, heterodimer of a catalytic subunit (MsrP) and a heme-binding subunit (MsrQ). The cofactor is FMN. It depends on heme b as a cofactor.

Its subcellular location is the cell inner membrane. In terms of biological role, part of the MsrPQ system that repairs oxidized periplasmic proteins containing methionine sulfoxide residues (Met-O), using respiratory chain electrons. Thus protects these proteins from oxidative-stress damage caused by reactive species of oxygen and chlorine generated by the host defense mechanisms. MsrPQ is essential for the maintenance of envelope integrity under bleach stress, rescuing a wide series of structurally unrelated periplasmic proteins from methionine oxidation. MsrQ provides electrons for reduction to the reductase catalytic subunit MsrP, using the quinone pool of the respiratory chain. The polypeptide is Protein-methionine-sulfoxide reductase heme-binding subunit MsrQ (Yersinia pestis bv. Antiqua (strain Antiqua)).